The primary structure comprises 278 residues: Membrane protein insertase YidC 2 (278 aa).

The N-terminal stretch at 1-18 is a signal peptide; the sequence is MHKRLFITLLGFIILLAG. A lipid anchor (N-palmitoyl cysteine) is attached at Cys19. Cys19 carries S-diacylglycerol cysteine lipidation. 4 helical membrane-spanning segments follow: residues 55 to 75, 132 to 152, 176 to 196, and 224 to 244; these read GFAI…FMLI, MLGC…YMSL, LIMT…NSIH, and AAAL…QMHF.

This sequence belongs to the OXA1/ALB3/YidC family. Type 2 subfamily.

Its subcellular location is the cell membrane. Required for the insertion and/or proper folding and/or complex formation of integral membrane proteins into the membrane. Involved in integration of membrane proteins that insert both dependently and independently of the Sec translocase complex, as well as at least some lipoproteins. The protein is Membrane protein insertase YidC 2 of Staphylococcus epidermidis (strain ATCC 12228 / FDA PCI 1200).